Reading from the N-terminus, the 406-residue chain is Odorant receptor 10a (406 aa).

The Cytoplasmic portion of the chain corresponds to 1–45; it reads MSEWLRFLKRDQQLDVYFFAVPRLSLDIMGYWPGKTGDTWPWRSL. A helical transmembrane segment spans residues 46-66; that stretch reads IHFAILAIGVATELHAGMCFL. Topologically, residues 67–74 are extracellular; that stretch reads DRQQITLA. Residues 75–95 form a helical membrane-spanning segment; the sequence is LETLCPAGTSAVTLLKMFLML. The Cytoplasmic portion of the chain corresponds to 96–143; sequence RFRQDLSIMWNRLRGLLFDPNWERPEQRDIRLKHSAMAARINFWPLSA. The chain crosses the membrane as a helical span at residues 144 to 164; the sequence is GFFTCTTYNLKPILIAMILYL. The Extracellular segment spans residues 165–189; sequence QNRYEDFVWFTPFNMTMPKVLLNYP. Asn-178 carries N-linked (GlcNAc...) asparagine glycosylation. Residues 190-210 traverse the membrane as a helical segment; it reads FFPLTYIFIAYTGYVTIFMFG. The Cytoplasmic segment spans residues 211-281; it reads GCDGFYFEFC…LTRFFRDRYT (71 aa). The chain crosses the membrane as a helical span at residues 282-302; sequence IITLAHFVSAAMVIGFSMVNL. The Extracellular segment spans residues 303–308; it reads LTLGNN. Residues 309–329 traverse the membrane as a helical segment; that stretch reads GLGAMLYVAYTVAALSQLLVY. Residues 330 to 372 lie on the Cytoplasmic side of the membrane; it reads CYGGTLVAESSTGLCRAMFSCPWQLFKPKQRRLVQLLILRSQR. Residues 373-393 traverse the membrane as a helical segment; sequence PVSMAVPFFSPSLATFAAILQ. Residues 394–406 are Extracellular-facing; the sequence is TSGSIIALVKSFQ.

It belongs to the insect chemoreceptor superfamily. Heteromeric odorant receptor channel (TC 1.A.69) family. Or1a subfamily. Interacts with Orco. Complexes exist early in the endomembrane system in olfactory sensory neurons (OSNs), coupling these complexes to the conserved ciliary trafficking pathway. In terms of tissue distribution, expressed in olfactory sensory neurons in the antenna.

The protein localises to the cell membrane. Functionally, odorant receptor which mediates acceptance or avoidance behavior, depending on its substrates. The odorant receptor repertoire encodes a large collection of odor stimuli that vary widely in identity, intensity, and duration. May form a complex with Orco to form odorant-sensing units, providing sensitive and prolonged odorant signaling and calcium permeability. Involved in the behavioral responses to esters, and specifically to ethyl hexanoate, benzaldehyde, and acetophenone. The sequence is that of Odorant receptor 10a (Or10a) from Drosophila melanogaster (Fruit fly).